A 196-amino-acid polypeptide reads, in one-letter code: HTH-type transcriptional regulator BetI (196 aa).

In terms of domain architecture, HTH tetR-type spans 8 to 68 (EVRRAQLIDA…ATMRHILRDL (61 aa)). A DNA-binding region (H-T-H motif) is located at residues 31–50 (TLASVAQRANISTGIVSHYF).

It functions in the pathway amine and polyamine biosynthesis; betaine biosynthesis via choline pathway [regulation]. Its function is as follows. Repressor involved in the biosynthesis of the osmoprotectant glycine betaine. It represses transcription of the choline transporter BetT and the genes of BetAB involved in the synthesis of glycine betaine. This is HTH-type transcriptional regulator BetI from Paraburkholderia phymatum (strain DSM 17167 / CIP 108236 / LMG 21445 / STM815) (Burkholderia phymatum).